The primary structure comprises 457 residues: MGVIDVLAAVGERFPAVRKPERKPTLYRRLAWTGVILVLYFIMSNIPLYGIPPQNIGGQVDLQRIIFASSAGTLMELGIGPIVTASLIIQVLVGAKIIKLDLADPEGRRKFTSAQKVLALAFAALEAVAFTVGGRYWVGTAIEPGPLDYALVSLQLFLGALLVIYFDEVMQKGWGIGSAISLFILAGVAQGVVWSIFGTIPGVAQDYGLVPAIISNPDLTLLARPNGFPDLTGFFTTLAAIILLVYLQAMRVEIPITSERFKGIRSRVPLQFIYVTNIPILLVGILVSDLLLVQRLLADYLGVESRAYQIYSSIVYYLSPPRGVVQSIADPVKTAVFIASWTVLSIVFGYMWVEIAGLNPREQAERLIKGGLAIPGMRSDPRVLERVLRRYIYPLTFLSSLIVAALVIVADIFGAYGTGTGLLLAVGIINQYYAMITRERALETYPLLRRILGEEVV.

At 1–20 (MGVIDVLAAVGERFPAVRKP) the chain is on the cytoplasmic side. A helical transmembrane segment spans residues 21-47 (ERKPTLYRRLAWTGVILVLYFIMSNIP). The Extracellular segment spans residues 48 to 59 (LYGIPPQNIGGQ). Residues 60-67 (VDLQRIIF) constitute an intramembrane region (helical). A discontinuously helical membrane pass occupies residues 60 to 88 (VDLQRIIFASSAGTLMELGIGPIVTASLI). Residues 68-79 (ASSAGTLMELGI) lie within the membrane without spanning it. An intramembrane region (helical) is located at residues 80 to 88 (GPIVTASLI). Topologically, residues 89 to 109 (IQVLVGAKIIKLDLADPEGRR) are cytoplasmic. The helical transmembrane segment at 110–134 (KFTSAQKVLALAFAALEAVAFTVGG) threads the bilayer. The Extracellular portion of the chain corresponds to 135 to 146 (RYWVGTAIEPGP). Residues 147–171 (LDYALVSLQLFLGALLVIYFDEVMQ) traverse the membrane as a helical segment. Residues 172–178 (KGWGIGS) lie on the Cytoplasmic side of the membrane. Residues 179-197 (AISLFILAGVAQGVVWSIF) traverse the membrane as a helical segment. At 198–229 (GTIPGVAQDYGLVPAIISNPDLTLLARPNGFP) the chain is on the extracellular side. A helical transmembrane segment spans residues 230–251 (DLTGFFTTLAAIILLVYLQAMR). Residues 252–276 (VEIPITSERFKGIRSRVPLQFIYVT) lie on the Cytoplasmic side of the membrane. A helical membrane pass occupies residues 277–298 (NIPILLVGILVSDLLLVQRLLA). The Extracellular portion of the chain corresponds to 299 to 332 (DYLGVESRAYQIYSSIVYYLSPPRGVVQSIADPV). The chain crosses the membrane as a helical span at residues 333–352 (KTAVFIASWTVLSIVFGYMW). At 353–395 (VEIAGLNPREQAERLIKGGLAIPGMRSDPRVLERVLRRYIYPL) the chain is on the cytoplasmic side. The chain crosses the membrane as a helical span at residues 396 to 414 (TFLSSLIVAALVIVADIFG). Topologically, residues 415-417 (AYG) are extracellular. The chain crosses the membrane as a helical span at residues 418–432 (TGTGLLLAVGIINQY). At 433-457 (YAMITRERALETYPLLRRILGEEVV) the chain is on the cytoplasmic side.

It belongs to the SecY/SEC61-alpha family. In terms of assembly, component of the Sec protein translocase complex. Heterotrimer consisting of alpha (SecY), beta (SecG) and gamma (SecE) subunits. The heterotrimers can form oligomers, although 1 heterotrimer is thought to be able to translocate proteins. Interacts with the ribosome. May interact with SecDF, and other proteins may be involved.

It localises to the cell membrane. In terms of biological role, the central subunit of the protein translocation channel SecYEG. Consists of two halves formed by TMs 1-5 and 6-10. These two domains form a lateral gate at the front which open onto the bilayer between TMs 2 and 7, and are clamped together by SecE at the back. The channel is closed by both a pore ring composed of hydrophobic SecY resides and a short helix (helix 2A) on the extracellular side of the membrane which forms a plug. The plug probably moves laterally to allow the channel to open. The ring and the pore may move independently. The polypeptide is Protein translocase subunit SecY (Aeropyrum pernix (strain ATCC 700893 / DSM 11879 / JCM 9820 / NBRC 100138 / K1)).